The sequence spans 82 residues: Turripeptide IX-07 (82 aa).

The signal sequence occupies residues 1–21; that stretch reads MGFYMLLTVALLLTSLMNVEA. Residues 22–39 constitute a propeptide that is removed on maturation; the sequence is TPVNQAERSALEKSGLGN. Intrachain disulfides connect Cys48–Cys70, Cys55–Cys74, and Cys60–Cys81.

In terms of tissue distribution, expressed by the venom duct.

Its subcellular location is the secreted. The chain is Turripeptide IX-07 from Gemmula speciosa (Splendid gem-turris).